A 312-amino-acid polypeptide reads, in one-letter code: Protein-methionine-sulfoxide reductase catalytic subunit MsrP (312 aa).

A signal peptide (tat-type signal) is located at residues 1-42 (MALFRYPRPLPSEITPRDMYLSRRSLIGGAAALGAVSATADA). Residues Asn-68, 71 to 72 (YE), Cys-126, Ser-161, Asn-211, Arg-216, and 227 to 229 (GIK) contribute to the Mo-molybdopterin site.

The protein belongs to the MsrP family. Heterodimer of a catalytic subunit (MsrP) and a heme-binding subunit (MsrQ). Requires Mo-molybdopterin as cofactor. Predicted to be exported by the Tat system. The position of the signal peptide cleavage has not been experimentally proven.

The protein resides in the periplasm. The catalysed reaction is L-methionyl-[protein] + a quinone + H2O = L-methionyl-(S)-S-oxide-[protein] + a quinol. It carries out the reaction L-methionyl-[protein] + a quinone + H2O = L-methionyl-(R)-S-oxide-[protein] + a quinol. Its function is as follows. Part of the MsrPQ system that repairs oxidized periplasmic proteins containing methionine sulfoxide residues (Met-O), using respiratory chain electrons. Thus protects these proteins from oxidative-stress damage caused by reactive species of oxygen and chlorine generated by the host defense mechanisms. MsrPQ is essential for the maintenance of envelope integrity under bleach stress, rescuing a wide series of structurally unrelated periplasmic proteins from methionine oxidation. The catalytic subunit MsrP is non-stereospecific, being able to reduce both (R-) and (S-) diastereoisomers of methionine sulfoxide. The polypeptide is Protein-methionine-sulfoxide reductase catalytic subunit MsrP (Gluconobacter oxydans (strain 621H) (Gluconobacter suboxydans)).